A 236-amino-acid polypeptide reads, in one-letter code: Ribonuclease HIII (236 aa).

Residues 9–236 (LYLIGSDESG…NVASFLKQLA (228 aa)) form the RNase H type-2 domain. Asp-15, Glu-16, and Asp-122 together coordinate a divalent metal cation.

Belongs to the RNase HII family. RnhC subfamily. It depends on a divalent metal cation as a cofactor.

The protein resides in the cytoplasm. The enzyme catalyses Endonucleolytic cleavage to 5'-phosphomonoester.. Functionally, endonuclease that specifically degrades the RNA of RNA-DNA hybrids. The protein is Ribonuclease HIII (rnhC) of Mycoplasma pneumoniae (strain ATCC 29342 / M129 / Subtype 1) (Mycoplasmoides pneumoniae).